The following is a 1136-amino-acid chain: Coiled-coil domain-containing protein 136 (1136 aa).

Positions 1–46 (MQAMDGEVLLPALYEEEEEEEEEEEEVEEEQVEKGGSLGSLSMGKH) are disordered. Positions 14–31 (YEEEEEEEEEEEEVEEEQ) are enriched in acidic residues. Phosphoserine is present on Ser-50. 2 coiled-coil regions span residues 293–631 (VMQL…QNQE) and 681–730 (LQAL…QTQS). Disordered stretches follow at residues 741-773 (GKNSGSRAPSTENFHRSYESSIDENEGYQKSYV), 814-837 (GSVSSGETLHRSYASSSTDEDPAE), 965-990 (NRPSISSEARGKNVNKNMNKNANGVR), and 1040-1111 (KKER…PDPP). Positions 743 to 752 (NSGSRAPSTE) are enriched in polar residues. A coiled-coil region spans residues 839-972 (EDLEHFEETV…KENRPSISSE (134 aa)). A compositionally biased stretch (low complexity) spans 976–989 (KNVNKNMNKNANGV). Residues 1017–1057 (YYKASQRRLDELMKEEKEIEEARKKEREKKAKKDLCKLATN) adopt a coiled-coil conformation. Basic and acidic residues predominate over residues 1040-1052 (KKEREKKAKKDLC). Acidic residues predominate over residues 1067-1091 (EPTEDEEENFEEYREGEDESCEAAE). The chain crosses the membrane as a helical span at residues 1112-1132 (IFSLPLVGLVVISALLWCWWA).

Present at high level in testis (at protein level).

The protein resides in the cytoplasmic vesicle. It localises to the secretory vesicle. It is found in the acrosome membrane. Its function is as follows. May play a role in acrosome formation in spermatogenesis and in fertilization. The sequence is that of Coiled-coil domain-containing protein 136 (Ccdc136) from Mus musculus (Mouse).